The following is a 590-amino-acid chain: METGNVVNAQPELSGIIDGSKSYMYEQLWKLCAGPLCDIPKLGENVYYFPQGNIELVDASTREELNELQPICDLPSKLQCRVIAIHLKVENNSDETYAEITLMPDTTQVVIPTQSENQFRPLVNSFTKVLTASDTSAYGGFFVPKKHAIECLPPLPLPAQELLAKDLHGNQWRFRHSYRGTPQRHSLTTGWNEFTTSKKLVKGDVIVFVRGETGELRVGIRRARHQQGNIPSSIVSIDCMRHGVIASAKHALDNQCIFIVVYKPSIRSSQFIVSYDKFLDAMNNKFIVGSRFTMRFEGDDFSERRYFGTIIGVNDFSPHWKCSEWRSLEVQWDEFASFSRPNKVSPWEIEHLMSALNVPRSSLLKNKRLREVNEFGQEIGQLSVASPMNTSLRYRDTTEDAMNPSRLLMSYPVQPMPKLNYNNQMVTQIEENITTKAVTNFRLFGVSLAIPLVIKDPIEEIGSDISKLTEGKKFGQSQTLRSPIEIQSKQFGSTRTCTKVQMQGVTIGRAVDLSVLNGYDQLILELEKLFDLKGQLQTRNQWKIAFTDSDGYEMLVGDDPWPEFCKMVKKILIYSKEEVKNLKSSKSLSS.

Residues 126 to 224 (FTKVLTASDT…ELRVGIRRAR (99 aa)) constitute a DNA-binding region (TF-B3). The region spanning 495–576 (RTCTKVQMQG…MVKKILIYSK (82 aa)) is the PB1 domain.

It belongs to the ARF family. In terms of assembly, homodimers and heterodimers.

The protein localises to the nucleus. Functionally, auxin response factors (ARFs) are transcriptional factors that bind specifically to the DNA sequence 5'-TGTCTC-3' found in the auxin-responsive promoter elements (AuxREs). Could act as transcriptional activator or repressor. Formation of heterodimers with Aux/IAA proteins may alter their ability to modulate early auxin response genes expression. This Arabidopsis thaliana (Mouse-ear cress) protein is Auxin response factor 20 (ARF20).